We begin with the raw amino-acid sequence, 506 residues long: Trans-cinnamate 4-monooxygenase (506 aa).

The chain crosses the membrane as a helical span at residues 3–23; sequence LLLLEKALLGLFAAAVVAIAV. (E)-cinnamate is bound by residues 213-218 and Ala-306; that span reads RSRLAQ. Residue Cys-447 participates in heme binding.

Belongs to the cytochrome P450 family. It depends on heme as a cofactor.

It localises to the membrane. The enzyme catalyses (E)-cinnamate + reduced [NADPH--hemoprotein reductase] + O2 = (E)-4-coumarate + oxidized [NADPH--hemoprotein reductase] + H2O + H(+). Its pathway is phenylpropanoid metabolism; trans-4-coumarate biosynthesis; trans-4-coumarate from trans-cinnamate: step 1/1. Catalyzes the first oxidative step of the phenylpropanoid pathway in higher plants by transforming trans-cinnamate into p-coumarate. The compounds formed by this pathway are essential components for lignification, pollination, and defense against ultraviolet light, predators and pathogens. This is Trans-cinnamate 4-monooxygenase (CYP73A2) from Ruta graveolens (Common rue).